The sequence spans 414 residues: Isocitrate dehydrogenase [NADP] cytoplasmic (414 aa).

S2 carries the post-translational modification N-acetylserine. Residue Y42 is modified to Phosphotyrosine. Residue 75–77 (TIT) coordinates NADP(+). T77 contacts substrate. Residue K81 is modified to N6-acetyllysine. An NADP(+)-binding site is contributed by R82. Substrate is bound by residues 94 to 100 (SPNGTIR) and R109. K126 carries the N6-succinyllysine modification. Residues R132 and K212 each contribute to the substrate site. N6-acetyllysine is present on residues K224, K233, and K243. Mn(2+) is bound at residue D252. K260 is an NADP(+) binding site. Mn(2+)-binding residues include D275 and D279. 310-315 (GTVTRH) is an NADP(+) binding site. K321 carries the N6-acetyllysine modification. N328 is a binding site for NADP(+). Position 389 is a phosphoserine (S389). K400 is subject to N6-succinyllysine.

Belongs to the isocitrate and isopropylmalate dehydrogenases family. As to quaternary structure, homodimer. Mg(2+) serves as cofactor. It depends on Mn(2+) as a cofactor. Post-translationally, acetylation at Lys-374 dramatically reduces catalytic activity.

It is found in the cytoplasm. It localises to the cytosol. It catalyses the reaction D-threo-isocitrate + NADP(+) = 2-oxoglutarate + CO2 + NADPH. Functionally, catalyzes the NADP(+)-dependent oxidative decarboxylation of isocitrate (D-threo-isocitrate) to 2-ketoglutarate (2-oxoglutarate), which is required by other enzymes such as the phytanoyl-CoA dioxygenase. Plays a critical role in the generation of NADPH, an important cofactor in many biosynthesis pathways. May act as a corneal epithelial crystallin and may be involved in maintaining corneal epithelial transparency. In Microtus ochrogaster (Prairie vole), this protein is Isocitrate dehydrogenase [NADP] cytoplasmic (IDH1).